The following is a 392-amino-acid chain: Formate-dependent phosphoribosylglycinamide formyltransferase (392 aa).

Residues 22–23 (EL) and Glu82 each bind N(1)-(5-phospho-beta-D-ribosyl)glycinamide. ATP contacts are provided by residues Arg114, Lys155, 160-165 (SSGKGQ), 195-198 (EGEV), and Glu203. The ATP-grasp domain maps to 119-308 (RLAAETLALP…EFALHVRAFL (190 aa)). Glu267 and Glu279 together coordinate Mg(2+). Residues Asp286, Lys355, and 362-363 (RR) each bind N(1)-(5-phospho-beta-D-ribosyl)glycinamide.

Belongs to the PurK/PurT family. Homodimer.

The catalysed reaction is N(1)-(5-phospho-beta-D-ribosyl)glycinamide + formate + ATP = N(2)-formyl-N(1)-(5-phospho-beta-D-ribosyl)glycinamide + ADP + phosphate + H(+). Its pathway is purine metabolism; IMP biosynthesis via de novo pathway; N(2)-formyl-N(1)-(5-phospho-D-ribosyl)glycinamide from N(1)-(5-phospho-D-ribosyl)glycinamide (formate route): step 1/1. Its function is as follows. Involved in the de novo purine biosynthesis. Catalyzes the transfer of formate to 5-phospho-ribosyl-glycinamide (GAR), producing 5-phospho-ribosyl-N-formylglycinamide (FGAR). Formate is provided by PurU via hydrolysis of 10-formyl-tetrahydrofolate. The protein is Formate-dependent phosphoribosylglycinamide formyltransferase of Edwardsiella ictaluri (strain 93-146).